The primary structure comprises 119 residues: Large ribosomal subunit protein bL20 (119 aa).

It belongs to the bacterial ribosomal protein bL20 family.

Its function is as follows. Binds directly to 23S ribosomal RNA and is necessary for the in vitro assembly process of the 50S ribosomal subunit. It is not involved in the protein synthesizing functions of that subunit. The sequence is that of Large ribosomal subunit protein bL20 from Nitrosomonas europaea (strain ATCC 19718 / CIP 103999 / KCTC 2705 / NBRC 14298).